A 60-amino-acid polypeptide reads, in one-letter code: MKAIIFLFAVLTVVAIIIPIISGEPNAGPHAASIDLNEIMKKITPDLLKMLDDIKTKIQG.

A signal peptide spans Met-1–Gly-23. Positions Glu-24–Ser-33 are excised as a propeptide. A Glutamine amide modification is found at Gln-59.

The protein belongs to the formicidae venom clade 2 family. As to expression, expressed by the venom gland.

The protein localises to the secreted. In terms of biological role, toxin that causes a rapid and irreversible paralysis when intrathoracically injected into insects (blowflies). Does not cause spontaneous nocifensive behaviors by intraplantar injection in mice. This chain is Myrmicitoxin(1)-Pr4c, found in Pogonomyrmex rugosus (Desert harvester ant).